A 67-amino-acid polypeptide reads, in one-letter code: Conotoxin reg3.8 (67 aa).

The signal sequence occupies residues 1–22; sequence MMSKLGVLLTICLLLFPLSVLP. Residues 23 to 50 constitute a propeptide that is removed on maturation; it reads LDGDQLADQPARHAQSAERNARFHPVKR. 3 disulfide bridges follow: cysteine 51–cysteine 65, cysteine 52–cysteine 63, and cysteine 57–cysteine 66. Residue cysteine 66 is modified to Cysteine amide.

It belongs to the conotoxin M superfamily. In terms of tissue distribution, expressed by the venom duct.

The protein resides in the secreted. This Conus regius (Crown cone) protein is Conotoxin reg3.8.